We begin with the raw amino-acid sequence, 233 residues long: Purine nucleoside phosphorylase DeoD-type (233 aa).

H4 is an a purine D-ribonucleoside binding site. Phosphate is bound by residues G20, R24, R43, and 87 to 90 (RVGT). Residues 179–181 (EME) and 203–204 (SD) each bind a purine D-ribonucleoside. D204 acts as the Proton donor in catalysis.

The protein belongs to the PNP/UDP phosphorylase family. As to quaternary structure, homohexamer; trimer of homodimers.

The enzyme catalyses a purine D-ribonucleoside + phosphate = a purine nucleobase + alpha-D-ribose 1-phosphate. It catalyses the reaction a purine 2'-deoxy-D-ribonucleoside + phosphate = a purine nucleobase + 2-deoxy-alpha-D-ribose 1-phosphate. Catalyzes the reversible phosphorolytic breakdown of the N-glycosidic bond in the beta-(deoxy)ribonucleoside molecules, with the formation of the corresponding free purine bases and pentose-1-phosphate. This is Purine nucleoside phosphorylase DeoD-type from Clostridium novyi (strain NT).